Consider the following 379-residue polypeptide: Chaperone protein DnaJ (379 aa).

Residues 5–69 (EYYERLGVDK…QKRAAYDQYG (65 aa)) form the J domain. The segment at 141–223 (GVEKQVKYNR…CHGSGHEKVA (83 aa)) adopts a CR-type zinc-finger fold. The Zn(2+) site is built by C154, C157, C171, C174, C197, C200, C211, and C214. CXXCXGXG motif repeat units follow at residues 154-161 (CHTCGGSG), 171-178 (CHKCGGRG), 197-204 (CDVCNGTG), and 211-218 (CETCHGSG).

It belongs to the DnaJ family. As to quaternary structure, homodimer. It depends on Zn(2+) as a cofactor.

Its subcellular location is the cytoplasm. In terms of biological role, participates actively in the response to hyperosmotic and heat shock by preventing the aggregation of stress-denatured proteins and by disaggregating proteins, also in an autonomous, DnaK-independent fashion. Unfolded proteins bind initially to DnaJ; upon interaction with the DnaJ-bound protein, DnaK hydrolyzes its bound ATP, resulting in the formation of a stable complex. GrpE releases ADP from DnaK; ATP binding to DnaK triggers the release of the substrate protein, thus completing the reaction cycle. Several rounds of ATP-dependent interactions between DnaJ, DnaK and GrpE are required for fully efficient folding. Also involved, together with DnaK and GrpE, in the DNA replication of plasmids through activation of initiation proteins. The chain is Chaperone protein DnaJ from Lactococcus lactis subsp. lactis (strain IL1403) (Streptococcus lactis).